The chain runs to 302 residues: Urease accessory protein UreG (302 aa).

Composition is skewed to basic and acidic residues over residues 1–32 (MHDPGEHGHGRHDHDHDHDHVHDHDHDHDHVH), 40–56 (HEHEHAHEHAHGHEHGH), and 64–76 (HAHEHAHGHTHEH). Residues 1–76 (MHDPGEHGHG…EHAHGHTHEH (76 aa)) are disordered. 105-112 (GPVGSGKT) serves as a coordination point for GTP.

The protein belongs to the SIMIBI class G3E GTPase family. UreG subfamily. In terms of assembly, homodimer. UreD, UreF and UreG form a complex that acts as a GTP-hydrolysis-dependent molecular chaperone, activating the urease apoprotein by helping to assemble the nickel containing metallocenter of UreC. The UreE protein probably delivers the nickel.

The protein resides in the cytoplasm. Functionally, facilitates the functional incorporation of the urease nickel metallocenter. This process requires GTP hydrolysis, probably effectuated by UreG. This Sorangium cellulosum (strain So ce56) (Polyangium cellulosum (strain So ce56)) protein is Urease accessory protein UreG.